A 276-amino-acid polypeptide reads, in one-letter code: Outer plastidial membrane protein porin (276 aa).

This sequence belongs to the eukaryotic mitochondrial porin (TC 1.B.8.1) family.

The protein localises to the plastid outer membrane. Functionally, forms a channel through the cell membrane that allows diffusion of small hydrophilic molecules. The channel adopts an open conformation at low or zero membrane potential and a closed conformation at potentials above 30-40 mV. The open state has a weak anion selectivity whereas the closed state is cation-selective. This Pisum sativum (Garden pea) protein is Outer plastidial membrane protein porin (POR1).